We begin with the raw amino-acid sequence, 274 residues long: NH(3)-dependent NAD(+) synthetase (274 aa).

46–53 (GISGGQDS) is a binding site for ATP. Mg(2+) is bound at residue Asp52. Arg140 provides a ligand contact to deamido-NAD(+). An ATP-binding site is contributed by Thr160. Glu165 contacts Mg(2+). Deamido-NAD(+) contacts are provided by Lys173 and Asp180. ATP is bound by residues Lys189 and Thr211. 260–261 (HK) serves as a coordination point for deamido-NAD(+).

The protein belongs to the NAD synthetase family. In terms of assembly, homodimer.

It catalyses the reaction deamido-NAD(+) + NH4(+) + ATP = AMP + diphosphate + NAD(+) + H(+). It functions in the pathway cofactor biosynthesis; NAD(+) biosynthesis; NAD(+) from deamido-NAD(+) (ammonia route): step 1/1. In terms of biological role, catalyzes the ATP-dependent amidation of deamido-NAD to form NAD. Uses ammonia as a nitrogen source. The protein is NH(3)-dependent NAD(+) synthetase of Streptococcus pyogenes serotype M3 (strain ATCC BAA-595 / MGAS315).